Here is a 1066-residue protein sequence, read N- to C-terminus: DNA-directed RNA polymerase subunit beta (1066 aa).

This sequence belongs to the RNA polymerase beta chain family. In terms of assembly, in plastids the minimal PEP RNA polymerase catalytic core is composed of four subunits: alpha, beta, beta', and beta''. When a (nuclear-encoded) sigma factor is associated with the core the holoenzyme is formed, which can initiate transcription.

The protein localises to the plastid. The protein resides in the chloroplast. It carries out the reaction RNA(n) + a ribonucleoside 5'-triphosphate = RNA(n+1) + diphosphate. Functionally, DNA-dependent RNA polymerase catalyzes the transcription of DNA into RNA using the four ribonucleoside triphosphates as substrates. This chain is DNA-directed RNA polymerase subunit beta, found in Psilotum nudum (Whisk fern).